The primary structure comprises 200 residues: LHFPL tetraspan subfamily member 6 protein (200 aa).

Residues 1–21 form the signal peptide; it reads MASSLTCAGVIWALLSFLCAA. 2 helical membrane-spanning segments follow: residues 84-104 and 123-143; these read ICTVVTGIGCGLLLLVALTAI and GIQFVGGLLIGSGCALYPLGW. N-linked (GlcNAc...) asparagine glycosylation is present at Asn154. The helical transmembrane segment at 172–192 threads the bilayer; the sequence is CTGAGAAAAMVLCTWMACFAG.

It belongs to the LHFP family.

It localises to the membrane. This Danio rerio (Zebrafish) protein is LHFPL tetraspan subfamily member 6 protein.